Reading from the N-terminus, the 179-residue chain is uncharacterized protein (179 aa).

The first 26 residues, 1-26 (MKKNMILFFGILKKLLICILKMEIKC), serve as a signal peptide directing secretion.

This is an uncharacterized protein from Acheta domesticus (House cricket).